A 113-amino-acid chain; its full sequence is Prefoldin subunit beta (113 aa).

Belongs to the prefoldin subunit beta family. As to quaternary structure, heterohexamer of two alpha and four beta subunits.

It localises to the cytoplasm. Molecular chaperone capable of stabilizing a range of proteins. Seems to fulfill an ATP-independent, HSP70-like function in archaeal de novo protein folding. This chain is Prefoldin subunit beta, found in Methanococcus maripaludis (strain C6 / ATCC BAA-1332).